The following is a 289-amino-acid chain: Acetyl-coenzyme A carboxylase carboxyl transferase subunit beta (289 aa).

A CoA carboxyltransferase N-terminal domain is found at 28–289; that stretch reads VMTKCPKCKK…QGGEMAVWQS (262 aa). Zn(2+) contacts are provided by C32, C35, C51, and C54. Residues 32 to 54 form a C4-type zinc finger; it reads CPKCKKIMYTKELLKNLKVCVNC.

This sequence belongs to the AccD/PCCB family. Acetyl-CoA carboxylase is a heterohexamer composed of biotin carboxyl carrier protein (AccB), biotin carboxylase (AccC) and two subunits each of ACCase subunit alpha (AccA) and ACCase subunit beta (AccD). It depends on Zn(2+) as a cofactor.

The protein resides in the cytoplasm. It carries out the reaction N(6)-carboxybiotinyl-L-lysyl-[protein] + acetyl-CoA = N(6)-biotinyl-L-lysyl-[protein] + malonyl-CoA. It participates in lipid metabolism; malonyl-CoA biosynthesis; malonyl-CoA from acetyl-CoA: step 1/1. In terms of biological role, component of the acetyl coenzyme A carboxylase (ACC) complex. Biotin carboxylase (BC) catalyzes the carboxylation of biotin on its carrier protein (BCCP) and then the CO(2) group is transferred by the transcarboxylase to acetyl-CoA to form malonyl-CoA. The sequence is that of Acetyl-coenzyme A carboxylase carboxyl transferase subunit beta from Bacillus cereus (strain AH187).